The sequence spans 520 residues: Bifunctional purine biosynthesis protein PurH (520 aa).

In terms of domain architecture, MGS-like spans 1–146; that stretch reads MAPVALLSVS…KNHADVAVLT (146 aa).

The protein belongs to the PurH family.

The catalysed reaction is (6R)-10-formyltetrahydrofolate + 5-amino-1-(5-phospho-beta-D-ribosyl)imidazole-4-carboxamide = 5-formamido-1-(5-phospho-D-ribosyl)imidazole-4-carboxamide + (6S)-5,6,7,8-tetrahydrofolate. It catalyses the reaction IMP + H2O = 5-formamido-1-(5-phospho-D-ribosyl)imidazole-4-carboxamide. Its pathway is purine metabolism; IMP biosynthesis via de novo pathway; 5-formamido-1-(5-phospho-D-ribosyl)imidazole-4-carboxamide from 5-amino-1-(5-phospho-D-ribosyl)imidazole-4-carboxamide (10-formyl THF route): step 1/1. It functions in the pathway purine metabolism; IMP biosynthesis via de novo pathway; IMP from 5-formamido-1-(5-phospho-D-ribosyl)imidazole-4-carboxamide: step 1/1. The chain is Bifunctional purine biosynthesis protein PurH from Synechococcus sp. (strain CC9902).